Consider the following 184-residue polypeptide: Ribonuclease HII (184 aa).

The region spanning 2–184 (AKICGIDEAG…KPKLAQSSLF (183 aa)) is the RNase H type-2 domain. A divalent metal cation-binding residues include Asp-8, Glu-9, and Asp-95.

Belongs to the RNase HII family. It depends on Mn(2+) as a cofactor. Mg(2+) is required as a cofactor.

The protein resides in the cytoplasm. The enzyme catalyses Endonucleolytic cleavage to 5'-phosphomonoester.. Its function is as follows. Endonuclease that specifically degrades the RNA of RNA-DNA hybrids. This is Ribonuclease HII from Campylobacter concisus (strain 13826).